Consider the following 312-residue polypeptide: Olfactory receptor 6C76 (312 aa).

The Extracellular portion of the chain corresponds to 1–23 (MKNRTSVTDFILLGLTDNPQLQV). Asn3 carries an N-linked (GlcNAc...) asparagine glycan. The helical transmembrane segment at 24–44 (VIFSFLFLTYVLSVTGNLTII) threads the bilayer. The Cytoplasmic portion of the chain corresponds to 45 to 57 (SLTLLDSHLKTPM). The helical transmembrane segment at 58 to 80 (YFFLRNFSLEISFTSVCNPRFLI) threads the bilayer. Topologically, residues 81–94 (SILTGDKSISYNAC) are extracellular. A disulfide bridge links Cys94 with Cys176. A helical membrane pass occupies residues 95–115 (AAQLFFFIFLGSTEFFLLASM). Residues 116–142 (SYDCYVAICKPLHYTTIMSDRICYQLI) lie on the Cytoplasmic side of the membrane. The chain crosses the membrane as a helical span at residues 143-163 (ISSWLAGFLVIFPPLAMGLQL). At 164 to 195 (DFCDSNVIDHFTCDSAPLLQISCTDTSTLELM) the chain is on the extracellular side. A helical membrane pass occupies residues 196–216 (SFILALFTLISTLILVILSYT). Residues 217-238 (YIIRTILRIPSAQQRKKAFSTC) lie on the Cytoplasmic side of the membrane. The helical transmembrane segment at 239–259 (SSHVIVVSISYGSCIFMYVKT) threads the bilayer. Residues 260-267 (SAKEGVAL) are Extracellular-facing. The chain crosses the membrane as a helical span at residues 268–288 (TKGVAILNTSVAPMLNPFIYT). The Cytoplasmic portion of the chain corresponds to 289-312 (LRNQQVKQAFKDVLRKISHKKKKH).

This sequence belongs to the G-protein coupled receptor 1 family.

Its subcellular location is the cell membrane. Its function is as follows. Odorant receptor. The chain is Olfactory receptor 6C76 (OR6C76) from Homo sapiens (Human).